A 1255-amino-acid chain; its full sequence is ATP-binding cassette sub-family B member 5 (1255 aa).

Residues 46–66 traverse the membrane as a helical segment; sequence IVLMTLGILASMINGATVPLM. In terms of domain architecture, ABC transmembrane type-1 1 spans 51 to 351; that stretch reads LGILASMING…SVAPHLETFT (301 aa). Asn86 and Asn92 each carry an N-linked (GlcNAc...) asparagine glycan. The chain crosses the membrane as a helical span at residues 104–124; sequence IIVLTLYYIGIGAAALIFGYV. Residue Asn189 is glycosylated (N-linked (GlcNAc...) asparagine). 2 helical membrane passes run 290–310 and 314–334; these read LSLGAVYFFMNGAYGLAFWYG and IFGGEPGYTIGTILAVFFSVI. N-linked (GlcNAc...) asparagine glycans are attached at residues Asn372 and Asn391. The ABC transporter 1 domain maps to 387-623; the sequence is IEFKNVSFSY…QGLYYSLAMA (237 aa). 422–429 contributes to the ATP binding site; the sequence is GPSGSGKS. The N-linked (GlcNAc...) asparagine glycan is linked to Asn643. 2 helical membrane-spanning segments follow: residues 694 to 714 and 738 to 758; these read VLGTLASALNGSVHPVFSIIF and MMLVVLGIVALVTYLMQGLFY. Residues 694–981 enclose the ABC transmembrane type-1 2 domain; the sequence is VLGTLASALN…TLVWAPEYSK (288 aa). Residue Asn790 is glycosylated (N-linked (GlcNAc...) asparagine). The next 3 helical transmembrane spans lie at 814-836, 841-863, and 955-975; these read LGIVTQDVSNMSLSILISFIYGW, LILSFAPVLAVTGMIQTAAMAGF, and MFIVFTAIAYGAMAIGETLVW. The ABC transporter 2 domain occupies 1016-1254; it reads LEFREVSFVY…GDTYFKLVAA (239 aa). Asn1036 carries an N-linked (GlcNAc...) asparagine glycan. 1051 to 1058 is a binding site for ATP; sequence GSSGCGKS. Asn1105, Asn1189, and Asn1229 each carry an N-linked (GlcNAc...) asparagine glycan.

Belongs to the ABC transporter superfamily. ABCB family. Multidrug resistance exporter (TC 3.A.1.201) subfamily. In terms of tissue distribution, in developing eye, expressed in basal limbal epithelium but not in central cornea. Acts as a marker of limbal stem cells.

The protein resides in the cell membrane. The enzyme catalyses daunorubicin(in) + ATP + H2O = daunorubicin(out) + ADP + phosphate + H(+). Functionally, energy-dependent efflux transporter responsible for decreased drug accumulation in multidrug-resistant cells. Specifically present in limbal stem cells, where it plays a key role in corneal development and repair. The protein is ATP-binding cassette sub-family B member 5 of Mus musculus (Mouse).